The sequence spans 335 residues: Ig gamma-2A chain C region secreted form (335 aa).

Ig-like domains are found at residues 6–98 (PSVY…KKIE), 126–225 (PSVF…KTIS), and 234–330 (PQVY…KTIS). An N-linked (GlcNAc...) asparagine glycan is attached at Asn185.

Its subcellular location is the secreted. In Mus musculus (Mouse), this protein is Ig gamma-2A chain C region secreted form.